The sequence spans 358 residues: Membrane-bound lytic murein transglycosylase C (358 aa).

An N-terminal signal peptide occupies residues 1-16; sequence MKKILALLVIAPLLIS. The N-palmitoyl cysteine moiety is linked to residue C17. C17 carries S-diacylglycerol cysteine lipidation.

It belongs to the transglycosylase Slt family.

The protein resides in the cell outer membrane. The enzyme catalyses Exolytic cleavage of the (1-&gt;4)-beta-glycosidic linkage between N-acetylmuramic acid (MurNAc) and N-acetylglucosamine (GlcNAc) residues in peptidoglycan, from either the reducing or the non-reducing ends of the peptidoglycan chains, with concomitant formation of a 1,6-anhydrobond in the MurNAc residue.. Murein-degrading enzyme. May play a role in recycling of muropeptides during cell elongation and/or cell division. The sequence is that of Membrane-bound lytic murein transglycosylase C from Serratia proteamaculans (strain 568).